A 238-amino-acid chain; its full sequence is uncharacterized protein (238 aa).

7 helical membrane passes run 19-39, 64-84, 85-105, 112-132, 141-161, 176-196, and 218-238; these read FIYG…LLGW, WSVI…IYNW, QVLY…YFTK, LWND…SYYF, ILWV…YVKS, VIFH…ILAL, and VGLI…VATL.

This sequence to B.subtilis YwiC.

Its subcellular location is the cell membrane. This is an uncharacterized protein from Haemophilus influenzae (strain ATCC 51907 / DSM 11121 / KW20 / Rd).